The primary structure comprises 327 residues: 2-methoxy-6-polyprenyl-1,4-benzoquinol methylase, mitochondrial (327 aa).

The transit peptide at 1-43 (MAAPIRAFVLRVLSDSTRNIHHVLRCRSKYLCRRAAITARRGY) directs the protein to the mitochondrion. S-adenosyl-L-methionine-binding positions include threonine 117, aspartate 171, and 199–200 (DA).

Belongs to the class I-like SAM-binding methyltransferase superfamily. MenG/UbiE family. Component of a multi-subunit COQ enzyme complex, composed of at least coq3, coq4, coq5, coq6, coq7 and coq9.

Its subcellular location is the mitochondrion inner membrane. It catalyses the reaction a 2-methoxy-6-(all-trans-polyprenyl)benzene-1,4-diol + S-adenosyl-L-methionine = a 5-methoxy-2-methyl-3-(all-trans-polyprenyl)benzene-1,4-diol + S-adenosyl-L-homocysteine + H(+). The protein operates within cofactor biosynthesis; ubiquinone biosynthesis. Functionally, methyltransferase required for the conversion of 2-polyprenyl-6-methoxy-1,4-benzoquinol (DDMQH2) to 2-polyprenyl-3-methyl-6-methoxy-1,4-benzoquinol (DMQH2). The sequence is that of 2-methoxy-6-polyprenyl-1,4-benzoquinol methylase, mitochondrial from Danio rerio (Zebrafish).